We begin with the raw amino-acid sequence, 359 residues long: Type-1 angiotensin II receptor (359 aa).

Residues 1-25 (MILNSSTEDGIKRIQDDCPKAGRHN) lie on the Extracellular side of the membrane. The N-linked (GlcNAc...) asparagine glycan is linked to N4. Residues Q15 and D17 each contribute to the angiotensin II site. Disulfide bonds link C18-C274 and C101-C180. A helical membrane pass occupies residues 26 to 55 (YIFVMIPTLYSIIFVVGIFGNSLVVIVIYF). The Cytoplasmic portion of the chain corresponds to 56-61 (YMKLKT). The helical transmembrane segment at 62–89 (VASVFLLNLALADLCFLLTLPLWAVYTA) threads the bilayer. At 90–98 (MEYRWPFGN) the chain is on the extracellular side. Residues 99–125 (YLCKIASASVSFNLYASVFLLTCLSID) form a helical membrane-spanning segment. Over 126–141 (RYLAIVHPMKSRLRRT) the chain is Cytoplasmic. The chain crosses the membrane as a helical span at residues 142–165 (MLVAKVTCIIIWLLAGLASLPAII). Residues 166 to 190 (HRNVFFIENTNITVCAFHYESQNST) lie on the Extracellular side of the membrane. An angiotensin II-binding site is contributed by R167. The N-linked (GlcNAc...) asparagine glycan is linked to N176. 3 residues coordinate angiotensin II: F182, H183, and Y184. N188 is a glycosylation site (N-linked (GlcNAc...) asparagine). Residues 191 to 216 (LPIGLGLTKNILGFLFPFLIILTSYT) form a helical membrane-spanning segment. Angiotensin II is bound at residue K199. The Cytoplasmic segment spans residues 217–239 (LIWKALKKAYEIQKNKPRNDDIF). The chain crosses the membrane as a helical span at residues 240–268 (KIIMAIVLFFFFSWIPHQIFTFLDVLIQL). Topologically, residues 269–278 (GIIRDCRIAD) are extracellular. A helical membrane pass occupies residues 279–304 (IVDTAMPITICIAYFNNCLNPLFYGF). The Cytoplasmic portion of the chain corresponds to 305 to 359 (LGKKFKKYFLQLLKYIPPKAKSHSNLSTKMSTLSYRPSDNVSSSTKKPAPCFEVE). The span at 335–350 (STLSYRPSDNVSSSTK) shows a compositional bias: polar residues. Positions 335–359 (STLSYRPSDNVSSSTKKPAPCFEVE) are disordered. Residue C355 is the site of S-palmitoyl cysteine attachment.

The protein belongs to the G-protein coupled receptor 1 family. As to quaternary structure, interacts with MAS1. Interacts with ARRB1. Interacts with FLNA (via filamin repeat 21); increases PKA-mediated phosphorylation of FLNA. C-terminal Ser or Thr residues may be phosphorylated.

The protein resides in the cell membrane. Receptor for angiotensin II, a vasoconstricting peptide, which acts as a key regulator of blood pressure and sodium retention by the kidney. The activated receptor in turn couples to G-alpha proteins G(q) (GNAQ, GNA11, GNA14 or GNA15) and thus activates phospholipase C and increases the cytosolic Ca(2+) concentrations, which in turn triggers cellular responses such as stimulation of protein kinase C. The sequence is that of Type-1 angiotensin II receptor (AGTR1) from Pan troglodytes (Chimpanzee).